Consider the following 423-residue polypeptide: Probable sodium/metabolite cotransporter BASS3, chloroplastic (423 aa).

A chloroplast-targeting transit peptide spans 1–45; sequence MAAAVAASSSSSSSSCAAVGVATASHPHRHRQARFVVSPPAPASP. The next 9 membrane-spanning stretches (helical) occupy residues 106 to 126, 138 to 158, 165 to 187, 192 to 214, 231 to 251, 254 to 274, 287 to 307, 318 to 338, and 380 to 400; these read ALLP…PATF, LGGI…ALAF, TIGY…RAFG, FFAG…ASFL, ISSV…VVPV, IAMA…GLLL, PVMP…PLAI, FLLL…GYWI, and VPAA…ASYW.

It belongs to the bile acid:sodium symporter (BASS) (TC 2.A.28) family.

The protein resides in the membrane. The protein localises to the plastid. Its subcellular location is the chloroplast envelope. Functionally, may function as sodium-coupled metabolite transporter across the chloroplast envelope. The sequence is that of Probable sodium/metabolite cotransporter BASS3, chloroplastic (BASS3) from Oryza sativa subsp. japonica (Rice).